A 199-amino-acid chain; its full sequence is Tumor necrosis factor ligand superfamily member 4 (199 aa).

The Cytoplasmic portion of the chain corresponds to 1–25 (MEGEGVQPPDENLENGSRPRFKWKK). The chain crosses the membrane as a helical; Signal-anchor for type II membrane protein span at residues 26-48 (VLRLVVSGIKAAGLLLCVVYVCL). Over 49–199 (QFSSSPAKDS…YSSTVNQVPL (151 aa)) the chain is Extracellular. Residues 59–176 (PIQRLRAPVT…QINDGELIIV (118 aa)) enclose the THD domain. Intrachain disulfides connect cysteine 70–cysteine 163 and cysteine 98–cysteine 184. Asparagine 91 and asparagine 157 each carry an N-linked (GlcNAc...) asparagine glycan.

The protein belongs to the tumor necrosis factor family. In terms of assembly, homotrimer. Detected in T-cell lines, but not in a macrophage cell line.

Its subcellular location is the membrane. Cytokine that binds to TNFRSF4. Co-stimulates T-cell proliferation and cytokine production. The protein is Tumor necrosis factor ligand superfamily member 4 (Tnfsf4) of Rattus norvegicus (Rat).